Consider the following 103-residue polypeptide: MATAKPKKKNPRLASGRKRVRQDTKLNAANTSLRSKYRTAVKNVEKAVAAGDKDKAKDLFAKAQSIVDIVADKGIFHKNKAARDKSRLSAKVKALALAPAKAA.

Positions 1–20 (MATAKPKKKNPRLASGRKRV) are enriched in basic residues. Residues 1-31 (MATAKPKKKNPRLASGRKRVRQDTKLNAANT) form a disordered region.

It belongs to the bacterial ribosomal protein bS20 family.

Its function is as follows. Binds directly to 16S ribosomal RNA. This chain is Small ribosomal subunit protein bS20, found in Polaromonas sp. (strain JS666 / ATCC BAA-500).